Reading from the N-terminus, the 143-residue chain is Actinoxanthin (143 aa).

Positions 1-33 (MSLRHMSRRASRFGVVAVASIGLAAAAQSVAFA) are cleaved as a signal peptide. Disulfide bonds link C69/C78 and C119/C124.

This sequence belongs to the neocarzinostatin family.

Its function is as follows. Binds non-covalently to a chromophore which is the cytotoxic and mutagenic component of the antibiotic. The chromophore binds to DNA as a weak intercalator and causes single- and double-strand breaks. This chain is Actinoxanthin (axnA), found in Streptomyces globisporus.